Consider the following 467-residue polypeptide: FAD-dependent oxidoreductase dbaF (467 aa).

An N-terminal signal peptide occupies residues 1 to 20 (MKSVLASGALTLAFSLAALA). Asn-96, Asn-134, Asn-337, Asn-391, and Asn-451 each carry an N-linked (GlcNAc...) asparagine glycan.

This sequence belongs to the beta-cyclopiazonate dehydrogenase family. FAD is required as a cofactor.

It participates in secondary metabolite biosynthesis. In terms of biological role, FAD-dependent oxidoreductase; part of the gene cluster that mediates the biosynthesis of the antibiotic 2,4-dihydroxy-3-methyl-6-(2-oxopropyl)benzaldehyde (DHMBA) and its derivatives. The direct non-reducing polyketide synthase dbaI product is 2,4-dihydroxy-3-methyl-6-(2-oxopropyl)benzaldehyde (DHMBA), produced by condensation of one acetyl-CoA starter unit with 4 malonyl-CoA units and one methylation step. The FAD-dependent monooxygenase dbaH is responsible for the synthesis of yellow pigments derived from the oxidation of DHMBA. The roles of dbaB, C, E and F have still to be determined. The sequence is that of FAD-dependent oxidoreductase dbaF from Emericella nidulans (strain FGSC A4 / ATCC 38163 / CBS 112.46 / NRRL 194 / M139) (Aspergillus nidulans).